A 775-amino-acid polypeptide reads, in one-letter code: 1,4-alpha-glucan branching enzyme GlgB (775 aa).

Residues 1 to 39 are disordered; that stretch reads MTSVHDFATATRPATPSAAAQEPAPALPPGLDRNTLDAL. The span at 8–24 shows a compositional bias: low complexity; that stretch reads ATATRPATPSAAAQEPA. Asp-454 functions as the Nucleophile in the catalytic mechanism. Glu-507 acts as the Proton donor in catalysis.

The protein belongs to the glycosyl hydrolase 13 family. GlgB subfamily. Monomer.

The catalysed reaction is Transfers a segment of a (1-&gt;4)-alpha-D-glucan chain to a primary hydroxy group in a similar glucan chain.. It functions in the pathway glycan biosynthesis; glycogen biosynthesis. Catalyzes the formation of the alpha-1,6-glucosidic linkages in glycogen by scission of a 1,4-alpha-linked oligosaccharide from growing alpha-1,4-glucan chains and the subsequent attachment of the oligosaccharide to the alpha-1,6 position. This chain is 1,4-alpha-glucan branching enzyme GlgB, found in Ralstonia nicotianae (strain ATCC BAA-1114 / GMI1000) (Ralstonia solanacearum).